The following is a 60-amino-acid chain: Large ribosomal subunit protein bL32 (60 aa).

This sequence belongs to the bacterial ribosomal protein bL32 family.

In Fervidobacterium nodosum (strain ATCC 35602 / DSM 5306 / Rt17-B1), this protein is Large ribosomal subunit protein bL32.